The primary structure comprises 296 residues: NAD kinase (296 aa).

Aspartate 73 serves as the catalytic Proton acceptor. NAD(+) is bound by residues 73-74, lysine 78, 151-152, arginine 178, aspartate 180, and 191-196; these read DG, NE, and TAHAMS.

It belongs to the NAD kinase family. A divalent metal cation is required as a cofactor.

The protein localises to the cytoplasm. The catalysed reaction is NAD(+) + ATP = ADP + NADP(+) + H(+). Functionally, involved in the regulation of the intracellular balance of NAD and NADP, and is a key enzyme in the biosynthesis of NADP. Catalyzes specifically the phosphorylation on 2'-hydroxyl of the adenosine moiety of NAD to yield NADP. In Francisella tularensis subsp. tularensis (strain WY96-3418), this protein is NAD kinase.